We begin with the raw amino-acid sequence, 268 residues long: Undecaprenyl-diphosphatase 1 (268 aa).

A run of 7 helical transmembrane segments spans residues 5–25, 43–63, 81–101, 107–127, 185–205, 214–234, and 248–268; these read TIVE…IPVS, GKAF…SVYF, HFVI…ALAH, VLFE…VILL, AEFS…FDLF, ADLP…LFVV, and LFGW…MIWG.

Belongs to the UppP family.

Its subcellular location is the cell inner membrane. It carries out the reaction di-trans,octa-cis-undecaprenyl diphosphate + H2O = di-trans,octa-cis-undecaprenyl phosphate + phosphate + H(+). Functionally, catalyzes the dephosphorylation of undecaprenyl diphosphate (UPP). Confers resistance to bacitracin. The protein is Undecaprenyl-diphosphatase 1 of Mesorhizobium japonicum (strain LMG 29417 / CECT 9101 / MAFF 303099) (Mesorhizobium loti (strain MAFF 303099)).